Consider the following 206-residue polypeptide: Transcription factor MYB57 (206 aa).

Positions M1 to V11 are enriched in basic residues. The interval M1–E20 is disordered. 2 consecutive HTH myb-type domains span residues E22–L74 and R75–M129. 2 DNA-binding regions (H-T-H motif) span residues W50–L74 and W102–I125. The segment at N138–I162 is disordered. The span at S144–G159 shows a compositional bias: low complexity.

In terms of tissue distribution, expressed specifically in flowers.

It is found in the nucleus. Its function is as follows. Transcription factor acting redundantly with MYB21 and MYB24 to control stamen filament elongation in the late developed flowers. Repressed at the transcript levels by DELLA proteins. The polypeptide is Transcription factor MYB57 (MYB57) (Arabidopsis thaliana (Mouse-ear cress)).